A 373-amino-acid chain; its full sequence is Dual-specificity RNA methyltransferase RlmN (373 aa).

Glutamate 94 (proton acceptor) is an active-site residue. In terms of domain architecture, Radical SAM core spans glutamate 100–aspartate 339. Residues cysteine 107 and cysteine 344 are joined by a disulfide bond. Residues cysteine 114, cysteine 118, and cysteine 121 each contribute to the [4Fe-4S] cluster site. Residues glycine 168 to glutamate 169, serine 200, serine 222 to histidine 224, and asparagine 301 contribute to the S-adenosyl-L-methionine site. Residue cysteine 344 is the S-methylcysteine intermediate of the active site.

Belongs to the radical SAM superfamily. RlmN family. It depends on [4Fe-4S] cluster as a cofactor.

Its subcellular location is the cytoplasm. The catalysed reaction is adenosine(2503) in 23S rRNA + 2 reduced [2Fe-2S]-[ferredoxin] + 2 S-adenosyl-L-methionine = 2-methyladenosine(2503) in 23S rRNA + 5'-deoxyadenosine + L-methionine + 2 oxidized [2Fe-2S]-[ferredoxin] + S-adenosyl-L-homocysteine. It catalyses the reaction adenosine(37) in tRNA + 2 reduced [2Fe-2S]-[ferredoxin] + 2 S-adenosyl-L-methionine = 2-methyladenosine(37) in tRNA + 5'-deoxyadenosine + L-methionine + 2 oxidized [2Fe-2S]-[ferredoxin] + S-adenosyl-L-homocysteine. Specifically methylates position 2 of adenine 2503 in 23S rRNA and position 2 of adenine 37 in tRNAs. m2A2503 modification seems to play a crucial role in the proofreading step occurring at the peptidyl transferase center and thus would serve to optimize ribosomal fidelity. The chain is Dual-specificity RNA methyltransferase RlmN from Shewanella putrefaciens (strain CN-32 / ATCC BAA-453).